Consider the following 242-residue polypeptide: Probable transcriptional regulatory protein Cphy_2507 (242 aa).

This sequence belongs to the TACO1 family.

It is found in the cytoplasm. This chain is Probable transcriptional regulatory protein Cphy_2507, found in Lachnoclostridium phytofermentans (strain ATCC 700394 / DSM 18823 / ISDg) (Clostridium phytofermentans).